A 484-amino-acid chain; its full sequence is Glutamate--tRNA ligase (484 aa).

The 'HIGH' region signature appears at 10–20; sequence PSPTGYLHVGG. The short motif at 252–256 is the 'KMSKS' region element; sequence KLSKR. Lys-255 contacts ATP.

This sequence belongs to the class-I aminoacyl-tRNA synthetase family. Glutamate--tRNA ligase type 1 subfamily. Monomer.

It is found in the cytoplasm. The catalysed reaction is tRNA(Glu) + L-glutamate + ATP = L-glutamyl-tRNA(Glu) + AMP + diphosphate. Functionally, catalyzes the attachment of glutamate to tRNA(Glu) in a two-step reaction: glutamate is first activated by ATP to form Glu-AMP and then transferred to the acceptor end of tRNA(Glu). The polypeptide is Glutamate--tRNA ligase (Mycoplasma genitalium (strain ATCC 33530 / DSM 19775 / NCTC 10195 / G37) (Mycoplasmoides genitalium)).